An 866-amino-acid chain; its full sequence is FHIP family protein v1g243165 (866 aa).

Disordered stretches follow at residues 739 to 761 (RDGPPPSLMRAHSIGSIGSASTS) and 781 to 814 (GSTADISEDASPVSQAPETTGRPRASAVVRESQT). Low complexity predominate over residues 751–761 (SIGSIGSASTS).

This sequence belongs to the FHIP family.

The sequence is that of FHIP family protein v1g243165 from Nematostella vectensis (Starlet sea anemone).